The sequence spans 1026 residues: UPF0182 protein FRAAL6027 (1026 aa).

A run of 7 helical transmembrane segments spans residues 13 to 33 (AKVIVPVLLAVALVIAFVAIF), 60 to 80 (ILLFLIFGAVMAVVIGTNIVL), 108 to 128 (YMKLVLVAVAAVFGLAAGLSA), 167 to 187 (FLLGFLLTAVLLSLLVTVLTH), 208 to 228 (AHISVLLGLLALLKAWAYYLD), 250 to 270 (AVLPAKLILLFISLACAVLFI), and 283 to 303 (LGAGILVLSSVVIGGIYPAFI). The span at 877–888 (AAAGAGTGATTT) shows a compositional bias: low complexity. Disordered regions lie at residues 877 to 916 (AAAGAGTGATTTTGGGGQATTQGGGTGAAPPGGTSGLQDA) and 958 to 1026 (LASP…PPPG). A compositionally biased stretch (gly residues) spans 889–903 (TGGGGQATTQGGGTG). Residues 970–1001 (PTPSRSAAPTTRGTAAGSAPPGTTPAVAAPAG) show a composition bias toward low complexity. Pro residues predominate over residues 1016 to 1026 (PQQPRAAPPPG).

This sequence belongs to the UPF0182 family.

It localises to the cell membrane. This chain is UPF0182 protein FRAAL6027, found in Frankia alni (strain DSM 45986 / CECT 9034 / ACN14a).